The primary structure comprises 1322 residues: Phosphoribosylformylglycinamidine synthase (1322 aa).

Position 300 to 311 (300 to 311 (GASTGAGGEIRD)) interacts with ATP. A compositionally biased stretch (polar residues) spans 593-608 (QQTPQRANHTETSPTP). Residues 593–613 (QQTPQRANHTETSPTPNTLPP) are disordered. A702 is an ATP binding site. D703, E742, N746, and D915 together coordinate Mg(2+). Residue S917 participates in ATP binding. The Glutamine amidotransferase type-1 domain maps to 1073-1322 (VAILREQGIN…LFRNARAWVG (250 aa)). Residue C1166 is the Nucleophile of the active site. Catalysis depends on residues H1287 and E1289.

It in the N-terminal section; belongs to the FGAMS family. As to quaternary structure, monomer.

The protein resides in the cytoplasm. It catalyses the reaction N(2)-formyl-N(1)-(5-phospho-beta-D-ribosyl)glycinamide + L-glutamine + ATP + H2O = 2-formamido-N(1)-(5-O-phospho-beta-D-ribosyl)acetamidine + L-glutamate + ADP + phosphate + H(+). It participates in purine metabolism; IMP biosynthesis via de novo pathway; 5-amino-1-(5-phospho-D-ribosyl)imidazole from N(2)-formyl-N(1)-(5-phospho-D-ribosyl)glycinamide: step 1/2. Functionally, phosphoribosylformylglycinamidine synthase involved in the purines biosynthetic pathway. Catalyzes the ATP-dependent conversion of formylglycinamide ribonucleotide (FGAR) and glutamine to yield formylglycinamidine ribonucleotide (FGAM) and glutamate. The chain is Phosphoribosylformylglycinamidine synthase from Xylella fastidiosa (strain 9a5c).